Consider the following 102-residue polypeptide: Monothiol glutaredoxin-S7 (102 aa).

The region spanning Met1–Trp101 is the Glutaredoxin domain. Position 21 (Cys21) interacts with [2Fe-2S] cluster. A Responsive for interaction with TGA factors motif is present at residues Ala99–Leu102.

This sequence belongs to the glutaredoxin family. CC-type subfamily.

The protein resides in the cytoplasm. It is found in the nucleus. Functionally, may only reduce GSH-thiol disulfides, but not protein disulfides. The protein is Monothiol glutaredoxin-S7 (GRXS7) of Arabidopsis thaliana (Mouse-ear cress).